The following is a 351-amino-acid chain: Photosystem II D2 protein (351 aa).

Residues 39 to 59 (CAYLAVGGWLTGTTFVTSWYT) traverse the membrane as a helical segment. Chlorophyll a is bound at residue H116. The chain crosses the membrane as a helical span at residues 123–139 (GFCLRQFEIARLVGLRP). Q128 and N141 together coordinate pheophytin a. Residues 151–164 (VFVSVFLMYPLGQA) form a helical membrane-spanning segment. H196 is a chlorophyll a binding site. The helical transmembrane segment at 206-226 (GALLCAIHGATVQNTLFEDGD) threads the bilayer. 2 residues coordinate a plastoquinone: H213 and F260. H213 contributes to the Fe cation binding site. H267 is a binding site for Fe cation. The chain crosses the membrane as a helical span at residues 277–293 (GLWTSAFGIVGLALNLR).

It belongs to the reaction center PufL/M/PsbA/D family. PSII is composed of 1 copy each of membrane proteins PsbA, PsbB, PsbC, PsbD, PsbE, PsbF, PsbH, PsbI, PsbJ, PsbK, PsbL, PsbM, PsbT, PsbX, PsbY, PsbZ, Psb30/Ycf12, at least 3 peripheral proteins of the oxygen-evolving complex and a large number of cofactors. It forms dimeric complexes. The D1/D2 heterodimer binds P680, chlorophylls that are the primary electron donor of PSII, and subsequent electron acceptors. It shares a non-heme iron and each subunit binds pheophytin, quinone, additional chlorophylls, carotenoids and lipids. There is also a Cl(-1) ion associated with D1 and D2, which is required for oxygen evolution. The PSII complex binds additional chlorophylls, carotenoids and specific lipids. serves as cofactor.

It is found in the plastid. It localises to the chloroplast thylakoid membrane. The catalysed reaction is 2 a plastoquinone + 4 hnu + 2 H2O = 2 a plastoquinol + O2. Photosystem II (PSII) is a light-driven water:plastoquinone oxidoreductase that uses light energy to abstract electrons from H(2)O, generating O(2) and a proton gradient subsequently used for ATP formation. It consists of a core antenna complex that captures photons, and an electron transfer chain that converts photonic excitation into a charge separation. The D1/D2 (PsbA/PsbD) reaction center heterodimer binds P680, the primary electron donor of PSII as well as several subsequent electron acceptors. D2 is needed for assembly of a stable PSII complex. The protein is Photosystem II D2 protein of Porphyra purpurea (Red seaweed).